We begin with the raw amino-acid sequence, 603 residues long: MKLRYLNILKEKLGREPTFVELQAFSVMWSEHCGYSHTKKYIRRLPKTGFEGNAGVVNLDDYYSVAFKIESHNHPSAIEPYNGAATGVGGIIRDVLAMGARPTAIFDSLHMSRIIDGIIEGIADYGNSIGVPTVGGELRISSLYAHNPLVNVLAAGVVRNDMLVDSKASRPGQVIVIFGGATGRDGIHGASFASEDLTGDKATKLSIQVGDPFAEKMLIEAFLEMVEEGLVEGAQDLGAGGVLSATSELVAKGNLGAIVHLDRVPLREPDMEPWEILISESQERMAVVTSPQKASRILEIARKHLLFGDVVAEVIEEPVYRVMYRNDLVMEVPVQLLANAPEEDIVEYTPGKIPEFKRVEFEEVNAREVFEQYDHMVGTDTVVPPGFGAAVMRIKRDGGYSLVTHSRADLALQDTYWGTLIAVLESVRKTLSVGAEPLAITNCVNYGDPDVDPVGLSAMMTALKNACEFSGVPVASGNASLYNTYQGKPIPPTLVVGMLGKVNPQKVAKPKPSKVFAVGWNDFELEREKELWRAIRKLSEEGAFILSSSQLLTRTHVETFREYGLKIEVKLPEVRPAHQMVLVFSERTPVVDVPVKEIGTLSR.

H32 is a catalytic residue. Y35 and K68 together coordinate ATP. E70 contacts Mg(2+). Residues 71 to 74 (SHNH) and R93 contribute to the substrate site. The active-site Proton acceptor is H72. D94 lines the Mg(2+) pocket. Residues D107 and 136-139 (GELR) contribute to the ATP site. Substrate contacts are provided by G189 and Q208. D236 is a binding site for Mg(2+). 280 to 282 (ESQ) is a binding site for substrate. G388, K429, N442, and G477 together coordinate ATP. Position 478 (N478) interacts with Mg(2+). Residue S480 participates in substrate binding. The ATP site is built by S549 and H556.

Belongs to the FGAMS family. As to quaternary structure, monomer. Part of the FGAM synthase complex composed of 1 PurL, 1 PurQ and 2 PurS subunits.

The protein localises to the cytoplasm. The enzyme catalyses N(2)-formyl-N(1)-(5-phospho-beta-D-ribosyl)glycinamide + L-glutamine + ATP + H2O = 2-formamido-N(1)-(5-O-phospho-beta-D-ribosyl)acetamidine + L-glutamate + ADP + phosphate + H(+). It functions in the pathway purine metabolism; IMP biosynthesis via de novo pathway; 5-amino-1-(5-phospho-D-ribosyl)imidazole from N(2)-formyl-N(1)-(5-phospho-D-ribosyl)glycinamide: step 1/2. Functionally, part of the phosphoribosylformylglycinamidine synthase complex involved in the purines biosynthetic pathway. Catalyzes the ATP-dependent conversion of formylglycinamide ribonucleotide (FGAR) and glutamine to yield formylglycinamidine ribonucleotide (FGAM) and glutamate. The FGAM synthase complex is composed of three subunits. PurQ produces an ammonia molecule by converting glutamine to glutamate. PurL transfers the ammonia molecule to FGAR to form FGAM in an ATP-dependent manner. PurS interacts with PurQ and PurL and is thought to assist in the transfer of the ammonia molecule from PurQ to PurL. The protein is Phosphoribosylformylglycinamidine synthase subunit PurL of Thermotoga maritima (strain ATCC 43589 / DSM 3109 / JCM 10099 / NBRC 100826 / MSB8).